The chain runs to 293 residues: 16S rRNA (guanine(1405)-N(7))-methyltransferase (293 aa).

Residues Phe-47, 80-82 (HAS), Arg-86, Ala-111, Asp-134, 160-161 (DL), Leu-176, and Gln-185 contribute to the S-adenosyl-L-methionine site. A compositionally biased stretch (low complexity) spans 258–274 (GRPAPAEGAAEPGATRP). Positions 258 to 293 (GRPAPAEGAAEPGATRPVVDVPATARPDADRVDPTG) are disordered. Residues 284 to 293 (PDADRVDPTG) show a composition bias toward basic and acidic residues.

The protein belongs to the methyltransferase superfamily. Aminoglycoside resistance family.

It catalyses the reaction guanosine(1405) in 16S rRNA + S-adenosyl-L-methionine = N(7)-methylguanosine(1405) in 16S rRNA + S-adenosyl-L-homocysteine. Its function is as follows. Specifically methylates the N(7) position of guanine 1405 in 16S rRNA. Confers resistance to aminoglycosides. The protein is 16S rRNA (guanine(1405)-N(7))-methyltransferase (fmrO) of Micromonospora olivasterospora.